The chain runs to 138 residues: Small ribosomal subunit protein uS11c (138 aa).

Belongs to the universal ribosomal protein uS11 family. Part of the 30S ribosomal subunit.

Its subcellular location is the plastid. The protein localises to the chloroplast. The polypeptide is Small ribosomal subunit protein uS11c (Nandina domestica (Heavenly bamboo)).